Here is a 226-residue protein sequence, read N- to C-terminus: 7-cyano-7-deazaguanine synthase (226 aa).

Position 9–19 (9–19 (YSGGLDSTTCL)) interacts with ATP. Positions 189, 199, 202, and 205 each coordinate Zn(2+).

It belongs to the QueC family. The cofactor is Zn(2+).

The enzyme catalyses 7-carboxy-7-deazaguanine + NH4(+) + ATP = 7-cyano-7-deazaguanine + ADP + phosphate + H2O + H(+). It functions in the pathway purine metabolism; 7-cyano-7-deazaguanine biosynthesis. Functionally, catalyzes the ATP-dependent conversion of 7-carboxy-7-deazaguanine (CDG) to 7-cyano-7-deazaguanine (preQ(0)). This chain is 7-cyano-7-deazaguanine synthase, found in Pelobacter propionicus (strain DSM 2379 / NBRC 103807 / OttBd1).